The primary structure comprises 334 residues: Magnesium-chelatase subunit ChlI (334 aa).

43 to 50 is a binding site for ATP; that stretch reads GDRGTGKS.

Belongs to the Mg-chelatase subunits D/I family.

The protein localises to the plastid. It localises to the chloroplast. The enzyme catalyses protoporphyrin IX + Mg(2+) + ATP + H2O = Mg-protoporphyrin IX + ADP + phosphate + 3 H(+). It functions in the pathway porphyrin-containing compound metabolism; chlorophyll biosynthesis. Functionally, involved in chlorophyll biosynthesis; introduces a magnesium ion into protoporphyrin IX to yield Mg-protoporphyrin IX. The polypeptide is Magnesium-chelatase subunit ChlI (chlI) (Olisthodiscus luteus (Marine phytoflagellate)).